The following is a 320-amino-acid chain: Aspartate carbamoyltransferase catalytic subunit (320 aa).

Residues R68 and T69 each contribute to the carbamoyl phosphate site. K96 provides a ligand contact to L-aspartate. Carbamoyl phosphate contacts are provided by R118, H148, and Q151. The L-aspartate site is built by R181 and R236. Carbamoyl phosphate-binding residues include G277 and P278.

The protein belongs to the aspartate/ornithine carbamoyltransferase superfamily. ATCase family. As to quaternary structure, heterododecamer (2C3:3R2) of six catalytic PyrB chains organized as two trimers (C3), and six regulatory PyrI chains organized as three dimers (R2).

The catalysed reaction is carbamoyl phosphate + L-aspartate = N-carbamoyl-L-aspartate + phosphate + H(+). The protein operates within pyrimidine metabolism; UMP biosynthesis via de novo pathway; (S)-dihydroorotate from bicarbonate: step 2/3. In terms of biological role, catalyzes the condensation of carbamoyl phosphate and aspartate to form carbamoyl aspartate and inorganic phosphate, the committed step in the de novo pyrimidine nucleotide biosynthesis pathway. The sequence is that of Aspartate carbamoyltransferase catalytic subunit from Polaromonas sp. (strain JS666 / ATCC BAA-500).